The primary structure comprises 998 residues: Kinesin-like protein KIF19 (998 aa).

In terms of domain architecture, Kinesin motor spans 11–346; that stretch reads QLMVALRVRP…LTYAGRAKNI (336 aa). Residue 104-111 participates in ATP binding; it reads GPTGCGKT. 2 coiled-coil regions span residues 360–391 and 424–452; these read HIAQ…RGQA and EQLA…EVQI. Basic and acidic residues predominate over residues 482 to 494; sequence ECYAKDDSEKDSD. The tract at residues 482–503 is disordered; that stretch reads ECYAKDDSEKDSDTGDDQPDIL. Residues 507–552 adopt a coiled-coil conformation; that stretch reads EVAAARESIAALVDEQKQLRKQKLALEQRCRELRARGRRLEETLPR. 4 stretches are compositionally biased toward polar residues: residues 662 to 676, 684 to 697, 746 to 761, and 836 to 852; these read SSLP…SLTP, KTLS…QNSA, SLGS…SENL, and TLQH…STGE. Disordered regions lie at residues 662-706, 746-765, 794-911, and 948-998; these read SSLP…TESE, SLGS…SEIP, GTEG…THLL, and KLPP…SRHN. Residues 989 to 998 show a composition bias toward basic and acidic residues; it reads HGKDGCSRHN.

This sequence belongs to the TRAFAC class myosin-kinesin ATPase superfamily. Kinesin family.

Its subcellular location is the cytoplasm. It is found in the cytoskeleton. It localises to the cell projection. The protein resides in the cilium. In terms of biological role, plus end-directed microtubule-dependent motor protein that regulates the length of motile cilia by mediating depolymerization of microtubules at ciliary tips. This Homo sapiens (Human) protein is Kinesin-like protein KIF19 (KIF19).